The primary structure comprises 498 residues: MASQGTKRSYEQMETDGERQNATEIRASVGKMIDGIGRFYIQMCTELKLSDYEGRLIQNSLTIERMVLSAFDERRNRYLEEHPSAGKDPKKTGGPIYKRVDGKWMRELVLYDKEEIRRIWRQANNGDDATAGLTHMMIWHSNLNDTTYQRTRALVRTGMDPRMCSLMQGSTLPRRSGAAGAAVKGVGTMVMELIRMIKRGINDRNFWRGENGRKTRGAYERMCNILKGKFQTAAQRAMMDQVRESRNPGNAEIEDLIFLARSALILRGSVAHKSCLPACVYGPAVASGYNFEKEGYSLVGIDPFKLLQNSQVYSLIRPNENPAHKSQLVWMACNSAAFEDLRLLSFIRGTKVSPRGKLSTRGVQIASNENMDTMESSTLELRSRYWAIRTRSGGNTNQQRASAGQISVQPAFSVQRNLPFDKSTIMAAFTGNTEGRTSDMRAEIIRMMEGAKPEEVSFRGRGVFELSDEKATNPIVPSFDMSNEGSYFFGDNAEEYDN.

The Unconventional nuclear localization signal motif lies at 1 to 18; that stretch reads MASQGTKRSYEQMETDGE. The interval 1 to 21 is disordered; it reads MASQGTKRSYEQMETDGERQN. The segment covering 8–21 has biased composition (basic and acidic residues); the sequence is RSYEQMETDGERQN. The Bipartite nuclear localization signal motif lies at 198-216; it reads KRGINDRNFWRGENGRKTR.

The protein belongs to the influenza viruses nucleoprotein family. As to quaternary structure, homomultimerizes to form the nucleocapsid. May bind host exportin-1/XPO1. Binds to viral genomic RNA. Protein-RNA contacts are mediated by a combination of electrostatic interactions between positively charged residues and the phosphate backbone and planar interactions between aromatic side chains and bases. Post-translationally, late in virus-infected cells, may be cleaved from a 56-kDa protein to a 53-kDa protein by a cellular caspase. This cleavage might be a marker for the onset of apoptosis in infected cells or have a specific function in virus host interaction.

The protein localises to the virion. Its subcellular location is the host nucleus. Functionally, encapsidates the negative strand viral RNA, protecting it from nucleases. The encapsidated genomic RNA is termed the ribonucleoprotein (RNP) and serves as template for transcription and replication. The RNP needs to be localized in the host nucleus to start an infectious cycle, but is too large to diffuse through the nuclear pore complex. NP comprises at least 2 nuclear localization signals that are responsible for the active RNP import into the nucleus through cellular importin alpha/beta pathway. Later in the infection, nclear export of RNPs are mediated through viral proteins NEP interacting with M1 which binds nucleoproteins. It is possible that nucleoprotein binds directly host exportin-1/XPO1 and plays an active role in RNPs nuclear export. M1 interaction with RNP seems to hide nucleoprotein's nuclear localization signals. Soon after a virion infects a new cell, M1 dissociates from the RNP under acidification of the virion driven by M2 protein. Dissociation of M1 from RNP unmasks nucleoprotein's nuclear localization signals, targeting the RNP to the nucleus. In Influenza A virus (strain A/Memphis/101/1972 H3N2), this protein is Nucleoprotein.